The primary structure comprises 334 residues: tRNA-dihydrouridine synthase B (334 aa).

Residues 16-18 (PMA) and Gln-70 contribute to the FMN site. The Proton donor role is filled by Cys-100. Residues Lys-139, 200–202 (NGD), and 224–225 (GR) contribute to the FMN site.

This sequence belongs to the Dus family. DusB subfamily. The cofactor is FMN.

The enzyme catalyses a 5,6-dihydrouridine in tRNA + NAD(+) = a uridine in tRNA + NADH + H(+). The catalysed reaction is a 5,6-dihydrouridine in tRNA + NADP(+) = a uridine in tRNA + NADPH + H(+). Functionally, catalyzes the synthesis of 5,6-dihydrouridine (D), a modified base found in the D-loop of most tRNAs, via the reduction of the C5-C6 double bond in target uridines. The protein is tRNA-dihydrouridine synthase B of Serratia marcescens.